Reading from the N-terminus, the 583-residue chain is Poly [ADP-ribose] polymerase 2 (583 aa).

Positions 1–77 (MAARRRRSTG…GMPGRSWASK (77 aa)) are disordered. Positions 1-103 (MAARRRRSTG…VDPECTAKVG (103 aa)) are N-terminal region (NTR). 2 short sequence motifs (nuclear localization signal) span residues 21–22 (KR) and 35–40 (PAKKTR). An N6-acetyllysine mark is found at Lys37 and Lys38. A compositionally biased stretch (basic and acidic residues) spans 57 to 67 (ANKDRTEDKQD). In terms of domain architecture, WGR spans 104–201 (KAHVYCEGND…EKFEKVPGKY (98 aa)). Ser226 and Ser232 each carry phosphoserine. Residues 231-348 (ESQLDLRVQE…DIEIAIKLVK (118 aa)) enclose the PARP alpha-helical domain. In terms of domain architecture, PARP catalytic spans 356 to 583 (HPLDQHYRNL…KVQFNFLQLW (228 aa)). Residues 428 to 430 (HGS), Gly437, Arg444, and Ser470 each bind NAD(+). The For poly [ADP-ribose] polymerase activity role is filled by Glu558.

This sequence belongs to the ARTD/PARP family. Component of a base excision repair (BER) complex, containing at least XRCC1, PARP1, POLB and LRIG3. Homo- and heterodimer with PARP1. Interacts (via the PARP catalytic domain) with HPF1. Interacts with core nucleosomes. Auto poly-ADP-ribosylated on serine residues, leading to dissociation of the PARP2-HPF1 complex from chromatin. Poly-ADP-ribosylated by PARP1. In terms of processing, acetylation reduces DNA binding and enzymatic activity. Post-translationally, proteolytically cleaved by caspase-8 (CASP8) in response to apoptosis, leading to its inactivation. In terms of tissue distribution, widely expressed, mainly in actively dividing tissues. The highest levels are in the brain, heart, pancreas, skeletal muscle and testis; also detected in kidney, liver, lung, placenta, ovary and spleen; levels are low in leukocytes, colon, small intestine, prostate and thymus.

It localises to the nucleus. The protein resides in the chromosome. The enzyme catalyses NAD(+) + (ADP-D-ribosyl)n-acceptor = nicotinamide + (ADP-D-ribosyl)n+1-acceptor + H(+).. It catalyses the reaction L-seryl-[protein] + NAD(+) = O-(ADP-D-ribosyl)-L-seryl-[protein] + nicotinamide + H(+). The catalysed reaction is L-aspartyl-[protein] + NAD(+) = 4-O-(ADP-D-ribosyl)-L-aspartyl-[protein] + nicotinamide. It carries out the reaction L-glutamyl-[protein] + NAD(+) = 5-O-(ADP-D-ribosyl)-L-glutamyl-[protein] + nicotinamide. ADP-ribosyltransferase activity is regulated via an allosteric activation mechanism. In absence of activation signal, PARP2 is autoinhibited by the PARP alpha-helical domain (also named HD region), which prevents effective NAD(+)-binding. Activity is highly stimulated by signals, which unfold the PARP alpha-helical domain, relieving autoinhibition. Poly-ADP-ribosyltransferase activity is tightly regulated and PARP2 is removed from damaged chromatin following initial poly-ADP-ribosylation of chromatin to avoid prolonged residence (trapping) that has cytotoxic consequences. CHD1L promotes PARP2 removal from chromatin. ADP-ribosyltransferase activity is inhibited by a number of PARP inhibitors (PARPi) compounds, that are used the treatment of breast or ovarian cancers that have defects in DNA repair by homologous recombination. PARPi molecules (niraparib, talazoparib, and, to a lesser extent, olaparib) also trap PARP2 at DNA damage sites. Poly-ADP-ribosyltransferase that mediates poly-ADP-ribosylation of proteins and plays a key role in DNA repair. Mediates glutamate, aspartate or serine ADP-ribosylation of proteins: the ADP-D-ribosyl group of NAD(+) is transferred to the acceptor carboxyl group of target residues and further ADP-ribosyl groups are transferred to the 2'-position of the terminal adenosine moiety, building up a polymer with an average chain length of 20-30 units. Serine ADP-ribosylation of proteins constitutes the primary form of ADP-ribosylation of proteins in response to DNA damage. Mediates glutamate and aspartate ADP-ribosylation of target proteins in absence of HPF1. Following interaction with HPF1, catalyzes serine ADP-ribosylation of target proteins; HPF1 conferring serine specificity by completing the PARP2 active site. PARP2 initiates the repair of double-strand DNA breaks: recognizes and binds DNA breaks within chromatin and recruits HPF1, licensing serine ADP-ribosylation of target proteins, such as histones, thereby promoting decompaction of chromatin and the recruitment of repair factors leading to the reparation of DNA strand breaks. HPF1 initiates serine ADP-ribosylation but restricts the polymerase activity of PARP2 in order to limit the length of poly-ADP-ribose chains. Specifically mediates formation of branched poly-ADP-ribosylation. Branched poly-ADP-ribose chains are specifically recognized by some factors, such as APLF. In addition to proteins, also able to ADP-ribosylate DNA: preferentially acts on 5'-terminal phosphates at DNA strand breaks termini in nicked duplex. In Homo sapiens (Human), this protein is Poly [ADP-ribose] polymerase 2.